The following is a 207-amino-acid chain: LexA repressor (207 aa).

The H-T-H motif DNA-binding region spans Val-28 to Ser-48. Residues Ser-129 and Lys-167 each act as for autocatalytic cleavage activity in the active site.

The protein belongs to the peptidase S24 family. In terms of assembly, homodimer.

The enzyme catalyses Hydrolysis of Ala-|-Gly bond in repressor LexA.. Functionally, represses a number of genes involved in the response to DNA damage (SOS response), including recA and lexA. In the presence of single-stranded DNA, RecA interacts with LexA causing an autocatalytic cleavage which disrupts the DNA-binding part of LexA, leading to derepression of the SOS regulon and eventually DNA repair. The polypeptide is LexA repressor (Halalkalibacterium halodurans (strain ATCC BAA-125 / DSM 18197 / FERM 7344 / JCM 9153 / C-125) (Bacillus halodurans)).